The primary structure comprises 509 residues: Maturase K (509 aa).

Belongs to the intron maturase 2 family. MatK subfamily.

It localises to the plastid. The protein localises to the chloroplast. In terms of biological role, usually encoded in the trnK tRNA gene intron. Probably assists in splicing its own and other chloroplast group II introns. In Nicotiana alata (Winged tobacco), this protein is Maturase K.